A 637-amino-acid polypeptide reads, in one-letter code: tRNA uridine 5-carboxymethylaminomethyl modification enzyme MnmG (637 aa).

14-19 contributes to the FAD binding site; it reads GAGHAG. 279-293 is an NAD(+) binding site; sequence GPRYCPSIEDKVVRF.

It belongs to the MnmG family. As to quaternary structure, homodimer. Heterotetramer of two MnmE and two MnmG subunits. It depends on FAD as a cofactor.

The protein localises to the cytoplasm. Its function is as follows. NAD-binding protein involved in the addition of a carboxymethylaminomethyl (cmnm) group at the wobble position (U34) of certain tRNAs, forming tRNA-cmnm(5)s(2)U34. In Desulfitobacterium hafniense (strain DSM 10664 / DCB-2), this protein is tRNA uridine 5-carboxymethylaminomethyl modification enzyme MnmG.